Here is a 483-residue protein sequence, read N- to C-terminus: Probable zinc metalloprotease PTRG_04977 (483 aa).

The signal sequence occupies residues 1 to 18 (MLFRSALLSNVLLLPACA). N-linked (GlcNAc...) asparagine glycans are attached at residues Asn96 and Asn121. Residues His167, Asp187, and Glu220 each coordinate Zn(2+). Asn235 is a glycosylation site (N-linked (GlcNAc...) asparagine). Asp247 provides a ligand contact to Zn(2+). Asn310, Asn362, Asn401, Asn411, and Asn421 each carry an N-linked (GlcNAc...) asparagine glycan. A Fibronectin type-III domain is found at 396 to 483 (PAMPRNVTID…KSPAVYPFPG (88 aa)).

This sequence belongs to the peptidase M28 family. M28B subfamily. Requires Zn(2+) as cofactor.

It localises to the secreted. This Pyrenophora tritici-repentis (strain Pt-1C-BFP) (Wheat tan spot fungus) protein is Probable zinc metalloprotease PTRG_04977.